A 329-amino-acid chain; its full sequence is E3 ubiquitin-protein ligase SINA-like 4 (329 aa).

The segment covering 1–12 (MTKLGRRNDGGG) has biased composition (basic and acidic residues). A disordered region spans residues 1–58 (MTKLGRRNDGGGKSHRSSTKRQRRTSVSVDDPSPGEEEEKTLVVLTDDSDSEEDDKPL). The segment covering 13-24 (KSHRSSTKRQRR) has biased composition (basic residues). The segment at 86-122 (CPNCFDPLKKPIFQCNNGHLACFLCCIKLKKRCSFCK) adopts an RING-type; degenerate zinc-finger fold. The interval 136 to 325 (VIKAGLVSCS…MEISIGDKND (190 aa)) is SBD. The SIAH-type zinc-finger motif lies at 139–198 (AGLVSCSNAIYGCKQSTTYGNQLQSHEKVCVFAPCSCPIKDCNYIGFYKDLINHFRATHK). The Zn(2+) site is built by C144, C151, H164, C168, C175, C180, H192, and H197.

It belongs to the SINA (Seven in absentia) family.

It catalyses the reaction S-ubiquitinyl-[E2 ubiquitin-conjugating enzyme]-L-cysteine + [acceptor protein]-L-lysine = [E2 ubiquitin-conjugating enzyme]-L-cysteine + N(6)-ubiquitinyl-[acceptor protein]-L-lysine.. Its pathway is protein modification; protein ubiquitination. Its function is as follows. E3 ubiquitin-protein ligase that mediates ubiquitination and subsequent proteasomal degradation of target proteins. E3 ubiquitin ligases accept ubiquitin from an E2 ubiquitin-conjugating enzyme in the form of a thioester and then directly transfers the ubiquitin to targeted substrates. It probably triggers the ubiquitin-mediated degradation of different substrates. The protein is E3 ubiquitin-protein ligase SINA-like 4 of Arabidopsis thaliana (Mouse-ear cress).